A 333-amino-acid chain; its full sequence is D-alanine--D-alanine ligase (333 aa).

Residues K124–M329 enclose the ATP-grasp domain. A154–E209 is a binding site for ATP. Mg(2+) is bound by residues D283, E296, and N298.

This sequence belongs to the D-alanine--D-alanine ligase family. Mg(2+) is required as a cofactor. Requires Mn(2+) as cofactor.

Its subcellular location is the cytoplasm. It catalyses the reaction 2 D-alanine + ATP = D-alanyl-D-alanine + ADP + phosphate + H(+). Its pathway is cell wall biogenesis; peptidoglycan biosynthesis. Cell wall formation. The protein is D-alanine--D-alanine ligase of Shewanella halifaxensis (strain HAW-EB4).